Reading from the N-terminus, the 344-residue chain is UPF0283 membrane protein YcjF (344 aa).

A run of 3 helical transmembrane segments spans residues 70–90 (MVMG…VQWT), 100–120 (VALG…GSVV), and 213–233 (ESTL…FIAW).

The protein belongs to the UPF0283 family.

It is found in the cell inner membrane. The chain is UPF0283 membrane protein YcjF from Shigella dysenteriae serotype 1 (strain Sd197).